The sequence spans 120 residues: NSSSVPLHGFHVHALGDTTNGCMSTGPHFNPTGKEHGAPQDENRHAGDLGNITAGADGVANVNVSDSQIPLTGAHSIIGRAVVVHADPDDLGKGGHELSKTTGNSNSSMDSCAHGIQGIL.

The Cu cation site is built by histidine 11, histidine 13, and histidine 28. A disordered region spans residues 16-52 (GDTTNGCMSTGPHFNPTGKEHGAPQDENRHAGDLGNI). Cysteine 22 and cysteine 112 are disulfide-bonded. Zn(2+) is bound by residues histidine 28, histidine 36, histidine 45, and aspartate 48. Positions 33-47 (GKEHGAPQDENRHAG) are enriched in basic and acidic residues. Histidine 85 contributes to the Cu cation binding site.

The protein belongs to the Cu-Zn superoxide dismutase family. In terms of assembly, homodimer. Requires Cu cation as cofactor. The cofactor is Zn(2+).

The protein resides in the cytoplasm. It carries out the reaction 2 superoxide + 2 H(+) = H2O2 + O2. Functionally, destroys radicals which are normally produced within the cells and which are toxic to biological systems. This chain is Superoxide dismutase [Cu-Zn] (sodC), found in Aspergillus japonicus.